The chain runs to 350 residues: MEERENSEEGDDGAGEEEEEDQGSGEDGGEVGAEREQEAELKDSLRPSVLDLQLALARLCEDEYQDQPSKMPVLGLQIKDHQFERSFSGNGKVPSPGKIVNELFKEAKEHGAIPIDDTSKSSGAFYRARTFTGRGYKLGDSSKREFEYMQGEDPFEQGQEIQILLKLWSNGFSLDDGELRSYSDPINAEFLESVKKGEIPVELQRLVHGGQVNLDMEDHQDQEYIKPRLKFKAFSGEGKKLGSVTPEIISTPSSPEEEHKRFLNAEVDLDEHVPTTKIQIRLADGTRLIQRFNLSHRIMDVRQFIIHARSDFAQCDFALLTTFPNVELTDETQTLEEADILNTVILQRLK.

Over residues 1 to 29 (MEERENSEEGDDGAGEEEEEDQGSGEDGG) the composition is skewed to acidic residues. The interval 1-46 (MEERENSEEGDDGAGEEEEEDQGSGEDGGEVGAEREQEAELKDSLR) is disordered. Positions 32–45 (GAEREQEAELKDSL) are enriched in basic and acidic residues. Residues 160–225 (EIQILLKLWS…MEDHQDQEYI (66 aa)) form the SEP domain. The UBX domain occupies 271–348 (EHVPTTKIQI…DILNTVILQR (78 aa)).

The protein belongs to the NSFL1C family.

It localises to the nucleus. It is found in the cytoplasm. The protein localises to the cytosol. The protein resides in the endoplasmic reticulum. Its subcellular location is the golgi apparatus. It localises to the cytoskeleton. It is found in the microtubule organizing center. The protein localises to the centrosome. Adapter protein required for Golgi and endoplasmic reticulum biogenesis. Involved in Golgi and endoplasmic reticulum maintenance during interphase and in their reassembly at the end of mitosis. Regulates the centrosomal levels of kinase aurka-a/Aurora A during mitotic progression by promoting aurka-a removal from centrosomes in prophase. Also, regulates spindle orientation during mitosis. This Xenopus laevis (African clawed frog) protein is UBX domain-containing protein 2B (ubxn2b).